The following is a 362-amino-acid chain: MKYTPLHKIHQQLGAKLVDFAGFEMPVQYDGILVEHKAVREAVGLFDVSHMGEFEVKGKGAKAFLQNMTTNDVESLCDGKAQYSLLLYEDGGVVDDLLVYKIADEHYFLIVNASNIEKDFDWLKQHQPDDEVVLENRSDELSLIAIQGPKAEAVLSKLTDVPLDAIKYYHFVFGDVCGKRTLISRTGYTGEAGFELCMANEHAEEIWHALIEAGLPFGIVPVGLGARDTLRLEMGYSLYGHEIDHQTNPYEAQLGWITKLQKGDFIGKNACVEKKLHLEQTLVGFTLTGKNIPRQGYKIQDLSGTDIGVVCSGTLSPTLGKPIGTGYVKSSFSKIDSKVYINIRGKLQEAAVVKVPFLHKNR.

Belongs to the GcvT family. In terms of assembly, the glycine cleavage system is composed of four proteins: P, T, L and H.

It carries out the reaction N(6)-[(R)-S(8)-aminomethyldihydrolipoyl]-L-lysyl-[protein] + (6S)-5,6,7,8-tetrahydrofolate = N(6)-[(R)-dihydrolipoyl]-L-lysyl-[protein] + (6R)-5,10-methylene-5,6,7,8-tetrahydrofolate + NH4(+). Its function is as follows. The glycine cleavage system catalyzes the degradation of glycine. This is Aminomethyltransferase from Chloroherpeton thalassium (strain ATCC 35110 / GB-78).